We begin with the raw amino-acid sequence, 174 residues long: MKFLLLTVGLTSICAIQAIENIHSKEELVVEKLIGPWYRVEEAKAMEFSIPLFDMNIKEVNRTPEGNLELIVLEQTDSCVEKKFLLKKTEKPAEFEIYIPSESASYTLSVMETDYDNYILGCLENVNYREKMACAHYERRIEENKGMEEFKKIVRTLTIPYTMIEAQTREMCRV.

A signal peptide spans 1 to 18 (MKFLLLTVGLTSICAIQA). 2 disulfides stabilise this stretch: Cys-79–Cys-172 and Cys-122–Cys-134.

Belongs to the calycin superfamily. Lipocalin family. As to quaternary structure, monomer.

It localises to the secreted. In terms of biological role, lactoglobulin is the primary component of whey, it binds retinol and is probably involved in the transport of that molecule. This is Beta-lactoglobulin (LGB) from Trichosurus vulpecula (Brush-tailed possum).